The primary structure comprises 435 residues: Actin-like protein 7A (435 aa).

Disordered stretches follow at residues 1-20 (MWAP…VGNQ) and 29-65 (QTAS…ERPK). A required for interaction with TES region spans residues 31–51 (ASLRDGPAKRAVWVRRRSSEP). Residues 47-65 (RSSEPQEPTESKAAKERPK) show a composition bias toward basic and acidic residues.

This sequence belongs to the actin family. As to quaternary structure, interacts (via N-terminus) with TES (via LIM domain 2). Heterodimer with TES; the heterodimer interacts with ENAH to form a heterotrimer. Interacts with ACTL9. Interacts with CYLC1; the interaction may be relevant for proper acrosome attachment to the nuclear envelope.

The protein localises to the cytoplasm. The protein resides in the cytoskeleton. Its subcellular location is the golgi apparatus. It is found in the nucleus. Its function is as follows. Essential for normal spermatogenesis and male fertility. Required for normal sperm head morphology, acroplaxome formation, acrosome attachment, and acrosome granule stability. May anchor and stabilize acrosomal adherence to the acroplaxome at least in part by facilitating the presence of F-actin in the subacrosomal space. May play an important role in formation and fusion of Golgi-derived vesicles during acrosome biogenesis. The chain is Actin-like protein 7A (ACTL7A) from Macaca fascicularis (Crab-eating macaque).